The following is a 435-amino-acid chain: MSNKDRHIDSSCSSFIKTEPSSPASLTDSVNHHSPGGSSDASGSYSSTMNGHQNGLDSPPLYPSAPILGGSGPVRKLYDDCSSTIVEDPQTKCEYMLNSMPKRLCLVCGDIASGYHYGVASCEACKAFFKRTIQGNIEYSCPATNECEITKRRRKSCQACRFMKCLKVGMLKEGVRLDRVRGGRQKYKRRIDAENSPYLNPQLVQPAKKPYNKIVSHLLVAEPEKIYAMPDPTVPDSDIKALTTLCDLADRELVVIIGWAKHIPGFSTLSLADQMSLLQSAWMEILILGVVYRSLSFEDELVYADDYIMDEDQSKLAGLLDLNNAILQLVKKYKSMKLEKEEFVTLKAIALANSDSMHIEDVEAVQKLQDVLHEALQDYEAGQHMEDPRRAGKMLMTLPLLRQTSTKAVQHFYNIKLEGKVPMHKLFSEMLEAKV.

The interval 1–64 is disordered; it reads MSNKDRHIDS…GLDSPPLYPS (64 aa). A compositionally biased stretch (polar residues) spans 10 to 29; that stretch reads SSCSSFIKTEPSSPASLTDS. Positions 34–47 are enriched in low complexity; it reads SPGGSSDASGSYSS. The nuclear receptor DNA-binding region spans 102 to 177; the sequence is KRLCLVCGDI…VGMLKEGVRL (76 aa). 2 NR C4-type zinc fingers span residues 105-125 and 141-160; these read CLVCGDIASGYHYGVASCEAC and CPATNECEITKRRRKSCQAC. An NR LBD domain is found at 210-434; the sequence is PYNKIVSHLL…KLFSEMLEAK (225 aa).

This sequence belongs to the nuclear hormone receptor family. NR3 subfamily. In terms of assembly, homodimer. Interacts with NRIP1, NCOA1 and NCOR2. Binds TLE1, PNRC1 and PNRC2. Binds GRIP1. Post-translationally, acetylated by PCAF/KAT2 (in vitro).

Its subcellular location is the nucleus. Functionally, orphan receptor that acts as a transcription activator in the absence of bound ligand. Binds specifically to an estrogen response element and activates reporter genes controlled by estrogen response elements. Induces the expression of PERM1 in the skeletal muscle. The chain is Estrogen-related receptor gamma (ESRRG) from Pongo abelii (Sumatran orangutan).